We begin with the raw amino-acid sequence, 95 residues long: Integration host factor subunit beta (95 aa).

It belongs to the bacterial histone-like protein family. In terms of assembly, heterodimer of an alpha and a beta chain.

Functionally, this protein is one of the two subunits of integration host factor, a specific DNA-binding protein that functions in genetic recombination as well as in transcriptional and translational control. The sequence is that of Integration host factor subunit beta from Jannaschia sp. (strain CCS1).